The primary structure comprises 378 residues: Protein RecA (378 aa).

66–73 (GPESSGKT) is a binding site for ATP. Residues 333 to 378 (PDAAKAEAATDAAAAADTAGTDDAAKSVPAPASKTAKATKATAVKS) form a disordered region. Over residues 338–378 (AEAATDAAAAADTAGTDDAAKSVPAPASKTAKATKATAVKS) the composition is skewed to low complexity.

This sequence belongs to the RecA family.

It is found in the cytoplasm. Functionally, can catalyze the hydrolysis of ATP in the presence of single-stranded DNA, the ATP-dependent uptake of single-stranded DNA by duplex DNA, and the ATP-dependent hybridization of homologous single-stranded DNAs. It interacts with LexA causing its activation and leading to its autocatalytic cleavage. This is Protein RecA from Streptomyces venezuelae (strain ATCC 10712 / CBS 650.69 / DSM 40230 / JCM 4526 / NBRC 13096 / PD 04745).